Consider the following 848-residue polypeptide: Phosphatidate phosphatase LPIN3 (848 aa).

Residues 1-108 are N-LIP; that stretch reads MNYVGQLAET…VPPRLCTSPI (108 aa). 3 disordered regions span residues 97–233, 271–298, and 314–373; these read EDVP…SPLR, PEEP…PGVR, and AVDS…NQHL. Positions 135 to 144 match the Nuclear localization signal motif; sequence GRRKRRRRRK. Basic residues predominate over residues 135-146; sequence GRRKRRRRRKPR. A compositionally biased stretch (acidic residues) spans 151–164; the sequence is DAVDSSSEELEAGA. 2 positions are modified to phosphoserine: serine 155 and serine 156. Positions 165-191 are enriched in low complexity; the sequence is ESELTLLEKPTPESPSAQEAEEPSSQP. The residue at position 218 (serine 218) is a Phosphoserine. Residues 271-282 show a composition bias toward low complexity; the sequence is PEEPSPSSSPSE. Polar residues predominate over residues 342-358; the sequence is KSWSWTTPESHTPSGHP. The residue at position 460 (serine 460) is a Phosphoserine. The span at 536-556 shows a compositional bias: basic and acidic residues; it reads EEHSSQREKAATRKQQGEKTE. The interval 536–568 is disordered; the sequence is EEHSSQREKAATRKQQGEKTEVLSSDDDVPDSP. The tract at residues 587–789 is C-LIP; it reads YKKSLRLSSD…RIFTVNPRGE (203 aa). The DXDXT motif signature appears at 641-645; sequence DIDGT. Positions 652 to 656 match the LXXIL motif motif; sequence LGHIL.

This sequence belongs to the lipin family. It depends on Mg(2+) as a cofactor. As to expression, significant expression in intestine and other regions of the gastrointestinal tract.

It is found in the nucleus. It carries out the reaction a 1,2-diacyl-sn-glycero-3-phosphate + H2O = a 1,2-diacyl-sn-glycerol + phosphate. With respect to regulation, inhibited by N-ethylmaleimide. Its function is as follows. Magnesium-dependent phosphatidate phosphatase enzyme which catalyzes the conversion of phosphatidic acid to diacylglycerol during triglyceride, phosphatidylcholine and phosphatidylethanolamine biosynthesis therefore regulates fatty acid metabolism. The sequence is that of Phosphatidate phosphatase LPIN3 from Mus musculus (Mouse).